The following is a 574-amino-acid chain: Proline--tRNA ligase (574 aa).

Belongs to the class-II aminoacyl-tRNA synthetase family. ProS type 1 subfamily. Homodimer.

The protein localises to the cytoplasm. The enzyme catalyses tRNA(Pro) + L-proline + ATP = L-prolyl-tRNA(Pro) + AMP + diphosphate. In terms of biological role, catalyzes the attachment of proline to tRNA(Pro) in a two-step reaction: proline is first activated by ATP to form Pro-AMP and then transferred to the acceptor end of tRNA(Pro). As ProRS can inadvertently accommodate and process non-cognate amino acids such as alanine and cysteine, to avoid such errors it has two additional distinct editing activities against alanine. One activity is designated as 'pretransfer' editing and involves the tRNA(Pro)-independent hydrolysis of activated Ala-AMP. The other activity is designated 'posttransfer' editing and involves deacylation of mischarged Ala-tRNA(Pro). The misacylated Cys-tRNA(Pro) is not edited by ProRS. In Teredinibacter turnerae (strain ATCC 39867 / T7901), this protein is Proline--tRNA ligase.